The sequence spans 100 residues: Urease subunit gamma (100 aa).

It belongs to the urease gamma subunit family. Heterotrimer of UreA (gamma), UreB (beta) and UreC (alpha) subunits. Three heterotrimers associate to form the active enzyme.

It localises to the cytoplasm. It catalyses the reaction urea + 2 H2O + H(+) = hydrogencarbonate + 2 NH4(+). The protein operates within nitrogen metabolism; urea degradation; CO(2) and NH(3) from urea (urease route): step 1/1. The protein is Urease subunit gamma of Pseudomonas syringae pv. tomato (strain ATCC BAA-871 / DC3000).